The chain runs to 410 residues: Protein trichome birefringence-like 34 (410 aa).

A helical; Signal-anchor for type II membrane protein membrane pass occupies residues Thr-13 to Leu-33. A GDS motif motif is present at residues Gly-133–Ser-135. A DCXHWCLPGXXDXWN motif motif is present at residues Asp-383–Asn-397.

The protein belongs to the PC-esterase family. TBL subfamily.

Its subcellular location is the golgi apparatus membrane. May act as a bridging protein that binds pectin and other cell wall polysaccharides. Probably involved in maintaining esterification of pectins. May be involved in the specific O-acetylation of cell wall polymers. This is Protein trichome birefringence-like 34 (TBL34) from Arabidopsis thaliana (Mouse-ear cress).